A 303-amino-acid polypeptide reads, in one-letter code: Oxygen-dependent coproporphyrinogen-III oxidase (303 aa).

A substrate-binding site is contributed by Ser93. Residues His97 and His107 each contribute to the a divalent metal cation site. Catalysis depends on His107, which acts as the Proton donor. Position 109 to 111 (109 to 111 (NVR)) interacts with substrate. Positions 149 and 179 each coordinate a divalent metal cation. The tract at residues 244–279 (YVEFNLVFDRGTLFGLQSGGRTESILLSMPPLAQWR) is important for dimerization. 262–264 (GGR) contributes to the substrate binding site.

This sequence belongs to the aerobic coproporphyrinogen-III oxidase family. As to quaternary structure, homodimer. Requires a divalent metal cation as cofactor.

Its subcellular location is the cytoplasm. It catalyses the reaction coproporphyrinogen III + O2 + 2 H(+) = protoporphyrinogen IX + 2 CO2 + 2 H2O. It participates in porphyrin-containing compound metabolism; protoporphyrin-IX biosynthesis; protoporphyrinogen-IX from coproporphyrinogen-III (O2 route): step 1/1. Functionally, involved in the heme biosynthesis. Catalyzes the aerobic oxidative decarboxylation of propionate groups of rings A and B of coproporphyrinogen-III to yield the vinyl groups in protoporphyrinogen-IX. In Bordetella pertussis (strain Tohama I / ATCC BAA-589 / NCTC 13251), this protein is Oxygen-dependent coproporphyrinogen-III oxidase.